A 142-amino-acid chain; its full sequence is Peptide methionine sulfoxide reductase MsrB (142 aa).

Positions 2 to 125 (IKKNKNDLNE…NSAAVQFIPY (124 aa)) constitute a MsrB domain. The Nucleophile role is filled by Cys114.

It belongs to the MsrB Met sulfoxide reductase family.

It carries out the reaction L-methionyl-[protein] + [thioredoxin]-disulfide + H2O = L-methionyl-(R)-S-oxide-[protein] + [thioredoxin]-dithiol. In Staphylococcus saprophyticus subsp. saprophyticus (strain ATCC 15305 / DSM 20229 / NCIMB 8711 / NCTC 7292 / S-41), this protein is Peptide methionine sulfoxide reductase MsrB.